A 333-amino-acid polypeptide reads, in one-letter code: Phosphate acyltransferase (333 aa).

The protein belongs to the PlsX family. As to quaternary structure, homodimer. Probably interacts with PlsY.

It is found in the cytoplasm. It carries out the reaction a fatty acyl-[ACP] + phosphate = an acyl phosphate + holo-[ACP]. The protein operates within lipid metabolism; phospholipid metabolism. In terms of biological role, catalyzes the reversible formation of acyl-phosphate (acyl-PO(4)) from acyl-[acyl-carrier-protein] (acyl-ACP). This enzyme utilizes acyl-ACP as fatty acyl donor, but not acyl-CoA. This chain is Phosphate acyltransferase, found in Thermosipho melanesiensis (strain DSM 12029 / CIP 104789 / BI429).